Reading from the N-terminus, the 321-residue chain is Glucokinase (321 aa).

ATP is bound at residue 8–13 (GDVGGT).

It belongs to the bacterial glucokinase family.

The protein localises to the cytoplasm. It catalyses the reaction D-glucose + ATP = D-glucose 6-phosphate + ADP + H(+). The protein is Glucokinase of Salmonella paratyphi B (strain ATCC BAA-1250 / SPB7).